Here is a 349-residue protein sequence, read N- to C-terminus: MKAQYFFWILFLIGFYWMLYLYQDFLMDALIAGLLCVGLFQVKVFLNKRFSNVISSFLCVLVLASVVIVPLYFIVYKGSNVIFEINFEKLSALIKWLKGTITENLSHFPAIHDGVSKFLENFSAASITGYLLKVSSYIGKYSLKLVTDALFILGLLFFFFYYGEKFYRYFLGVLPLEMNQSKKIFEEVAGILRIVLLTSLITVILEGVAFGTMIIWFGHDGWSLGILYGLASLVPAVGGALIWIPIAIYELYHGHVNEAIFIVLYSILLIGVLIDSVIKPILIVFIKKRIFKTTLKINEILIFFSMIAGISQFGFWGIIVGPTITAFFIALLRLYENYFIQKEQKTCEC.

8 helical membrane-spanning segments follow: residues 6–26 (FFWI…QDFL), 27–47 (MDAL…VFLN), 56–76 (SFLC…FIVY), 143–163 (LKLV…FYYG), 195–215 (VLLT…TMII), 224–244 (LGIL…LIWI), 258–278 (EAIF…DSVI), and 300–320 (ILIF…GIIV).

It belongs to the autoinducer-2 exporter (AI-2E) (TC 2.A.86) family.

It localises to the cell membrane. The protein is Putative transport protein jhp_0514 of Helicobacter pylori (strain J99 / ATCC 700824) (Campylobacter pylori J99).